Reading from the N-terminus, the 429-residue chain is Ribosomal RNA small subunit methyltransferase B (429 aa).

Residues 254–260 (CAAPGGK), aspartate 277, aspartate 303, and aspartate 322 each bind S-adenosyl-L-methionine. Cysteine 375 (nucleophile) is an active-site residue.

The protein belongs to the class I-like SAM-binding methyltransferase superfamily. RsmB/NOP family.

Its subcellular location is the cytoplasm. It carries out the reaction cytidine(967) in 16S rRNA + S-adenosyl-L-methionine = 5-methylcytidine(967) in 16S rRNA + S-adenosyl-L-homocysteine + H(+). Specifically methylates the cytosine at position 967 (m5C967) of 16S rRNA. This is Ribosomal RNA small subunit methyltransferase B from Shigella flexneri serotype 5b (strain 8401).